The chain runs to 505 residues: ADP-ribosylarginine hydrolase CG2909 (505 aa).

Residues Arg-198, Gly-336, Gly-338, Gly-340, Val-341, Trp-342, Trp-377, Asp-432, Asn-439, Glu-440, Gly-450, and Asp-451 each contribute to the ADP-D-ribose site.

It carries out the reaction N(omega)-(ADP-D-ribosyl)-L-arginyl-[protein] + H2O = ADP-D-ribose + L-arginyl-[protein]. The catalysed reaction is N(omega)-(ADP-D-ribosyl)-L-arginine + H2O = ADP-D-ribose + L-arginine. Its function is as follows. Protein ADP-ribosyl hydrolase that specifically removes mono-ADP-ribosyl modifications from protein arginine residues. In Drosophila melanogaster (Fruit fly), this protein is ADP-ribosylarginine hydrolase CG2909.